We begin with the raw amino-acid sequence, 95 residues long: Small ribosomal subunit protein uS19 (95 aa).

It belongs to the universal ribosomal protein uS19 family.

Protein S19 forms a complex with S13 that binds strongly to the 16S ribosomal RNA. In Thermotoga sp. (strain RQ2), this protein is Small ribosomal subunit protein uS19.